We begin with the raw amino-acid sequence, 238 residues long: Orotidine 5'-phosphate decarboxylase (238 aa).

Residues Asp18, Lys40, 67–76, Thr122, Arg183, Gln192, and Arg213 each bind substrate; that span reads DMKLLDIDNT. The active-site Proton donor is Lys69.

It belongs to the OMP decarboxylase family. Type 1 subfamily. In terms of assembly, homodimer.

It catalyses the reaction orotidine 5'-phosphate + H(+) = UMP + CO2. It participates in pyrimidine metabolism; UMP biosynthesis via de novo pathway; UMP from orotate: step 2/2. Its function is as follows. Catalyzes the decarboxylation of orotidine 5'-monophosphate (OMP) to uridine 5'-monophosphate (UMP). The polypeptide is Orotidine 5'-phosphate decarboxylase (Brucella canis (strain ATCC 23365 / NCTC 10854 / RM-666)).